The chain runs to 482 residues: tRNA sulfurtransferase (482 aa).

In terms of domain architecture, THUMP spans 61–165 (LAIRDALTRI…DDRLLLIKGR (105 aa)). ATP-binding positions include 183–184 (LI), lysine 265, glycine 287, and glutamine 296. A disulfide bond links cysteine 344 and cysteine 456. The Rhodanese domain occupies 404-482 (FGPNDVILDI…GFNNVKVYRP (79 aa)). The active-site Cysteine persulfide intermediate is cysteine 456.

It belongs to the ThiI family.

The protein resides in the cytoplasm. It catalyses the reaction [ThiI sulfur-carrier protein]-S-sulfanyl-L-cysteine + a uridine in tRNA + 2 reduced [2Fe-2S]-[ferredoxin] + ATP + H(+) = [ThiI sulfur-carrier protein]-L-cysteine + a 4-thiouridine in tRNA + 2 oxidized [2Fe-2S]-[ferredoxin] + AMP + diphosphate. The catalysed reaction is [ThiS sulfur-carrier protein]-C-terminal Gly-Gly-AMP + S-sulfanyl-L-cysteinyl-[cysteine desulfurase] + AH2 = [ThiS sulfur-carrier protein]-C-terminal-Gly-aminoethanethioate + L-cysteinyl-[cysteine desulfurase] + A + AMP + 2 H(+). It participates in cofactor biosynthesis; thiamine diphosphate biosynthesis. Catalyzes the ATP-dependent transfer of a sulfur to tRNA to produce 4-thiouridine in position 8 of tRNAs, which functions as a near-UV photosensor. Also catalyzes the transfer of sulfur to the sulfur carrier protein ThiS, forming ThiS-thiocarboxylate. This is a step in the synthesis of thiazole, in the thiamine biosynthesis pathway. The sulfur is donated as persulfide by IscS. The protein is tRNA sulfurtransferase of Escherichia coli O127:H6 (strain E2348/69 / EPEC).